The primary structure comprises 439 residues: 3-phosphoshikimate 1-carboxyvinyltransferase (439 aa).

3-phosphoshikimate contacts are provided by Lys-27, Ser-28, and Arg-32. Residue Lys-27 participates in phosphoenolpyruvate binding. Residues Gly-101 and Arg-130 each coordinate phosphoenolpyruvate. Residues Ser-175, Gln-177, Asp-326, and Lys-353 each contribute to the 3-phosphoshikimate site. Phosphoenolpyruvate is bound at residue Gln-177. The active-site Proton acceptor is the Asp-326. 2 residues coordinate phosphoenolpyruvate: Arg-357 and Arg-399.

It belongs to the EPSP synthase family. As to quaternary structure, monomer.

The protein resides in the cytoplasm. It catalyses the reaction 3-phosphoshikimate + phosphoenolpyruvate = 5-O-(1-carboxyvinyl)-3-phosphoshikimate + phosphate. It functions in the pathway metabolic intermediate biosynthesis; chorismate biosynthesis; chorismate from D-erythrose 4-phosphate and phosphoenolpyruvate: step 6/7. Catalyzes the transfer of the enolpyruvyl moiety of phosphoenolpyruvate (PEP) to the 5-hydroxyl of shikimate-3-phosphate (S3P) to produce enolpyruvyl shikimate-3-phosphate and inorganic phosphate. In Synechococcus sp. (strain WH7803), this protein is 3-phosphoshikimate 1-carboxyvinyltransferase.